The sequence spans 151 residues: Arginine repressor (151 aa).

This sequence belongs to the ArgR family. As to quaternary structure, homohexamer.

Its subcellular location is the cytoplasm. It participates in amino-acid biosynthesis; L-arginine biosynthesis [regulation]. In terms of biological role, regulates arginine biosynthesis genes. The polypeptide is Arginine repressor (argR) (Haemophilus influenzae (strain ATCC 51907 / DSM 11121 / KW20 / Rd)).